The sequence spans 224 residues: Protein DCL, chloroplastic (224 aa).

The transit peptide at 1-50 (MASICTSNFHFLCRKNNSSPISHHLLLSPSSLSFSRCGGLRLCRCAAVKT) directs the protein to the chloroplast. Residues 76–98 (TTSESEELVKEESDDEVGKKSGD) form a disordered region. A compositionally biased stretch (basic and acidic residues) spans 82 to 98 (ELVKEESDDEVGKKSGD).

Its subcellular location is the plastid. The protein localises to the chloroplast. Has a function in the early stage of chloroplast development and palisade cell morphogenesis. Required for correct plastid ribosome assembly. Required for processing and maturation of 4.5S rRNA. The polypeptide is Protein DCL, chloroplastic (DCL) (Solanum lycopersicum (Tomato)).